Consider the following 143-residue polypeptide: uncharacterized protein (143 aa).

The interval 35 to 59 is disordered; the sequence is ITKDRGDRDDGRYGEPRIQRKPGQL. Residues 36-52 show a composition bias toward basic and acidic residues; the sequence is TKDRGDRDDGRYGEPRI.

This is an uncharacterized protein from Streptomyces fradiae (Streptomyces roseoflavus).